A 277-amino-acid polypeptide reads, in one-letter code: S-formylglutathione hydrolase FrmB (277 aa).

Active-site charge relay system residues include S145, D221, and H254.

The protein belongs to the esterase D family.

The catalysed reaction is S-formylglutathione + H2O = formate + glutathione + H(+). Serine hydrolase involved in the detoxification of formaldehyde. Hydrolyzes S-formylglutathione to glutathione and formate. This is S-formylglutathione hydrolase FrmB (frmB) from Escherichia coli O9:H4 (strain HS).